Here is a 340-residue protein sequence, read N- to C-terminus: Phosphoribosylformylglycinamidine cyclo-ligase (340 aa).

This sequence belongs to the AIR synthase family.

Its subcellular location is the cytoplasm. The enzyme catalyses 2-formamido-N(1)-(5-O-phospho-beta-D-ribosyl)acetamidine + ATP = 5-amino-1-(5-phospho-beta-D-ribosyl)imidazole + ADP + phosphate + H(+). It functions in the pathway purine metabolism; IMP biosynthesis via de novo pathway; 5-amino-1-(5-phospho-D-ribosyl)imidazole from N(2)-formyl-N(1)-(5-phospho-D-ribosyl)glycinamide: step 2/2. In Streptococcus uberis (strain ATCC BAA-854 / 0140J), this protein is Phosphoribosylformylglycinamidine cyclo-ligase.